We begin with the raw amino-acid sequence, 69 residues long: Large ribosomal subunit protein uL29 (69 aa).

The protein belongs to the universal ribosomal protein uL29 family.

This chain is Large ribosomal subunit protein uL29, found in Polaromonas sp. (strain JS666 / ATCC BAA-500).